Consider the following 464-residue polypeptide: Sugar transporter ERD6-like 1 (464 aa).

Helical transmembrane passes span 23-43 (ITCG…VYGC), 72-92 (VMTL…AVIG), 95-115 (QTMW…AFAH), 125-145 (GFLG…IAEI), 156-176 (FSNQ…GNFF), 180-200 (TLAL…FFIP), 263-283 (LIIG…AISA), 298-318 (IGTS…MFAV), 326-346 (LLMS…LSYY), 359-379 (PILI…LGGL), 399-419 (LVTV…NFMM), and 424-444 (FGTY…VWTL).

It belongs to the major facilitator superfamily. Sugar transporter (TC 2.A.1.1) family.

It localises to the membrane. In terms of biological role, sugar transporter. This is Sugar transporter ERD6-like 1 (SUGTL4) from Arabidopsis thaliana (Mouse-ear cress).